The chain runs to 237 residues: MTPAEIAPKDRLIVALDLPSVDAAEAMIARLGDSVTFYKIGYRLAYAGGLPLVARLADKGKKVFLDLKLHDIGNTVAQGVESITRLGATFLTVHAYPQTMKGAVEGRGGSNLKILAVTVLTSYNEDDLHAAGFRLGVAELVEARAQQAQVLGIDGLVSSPEEVGALRKIVGHQMSLVTPGIRPAGSASGDQKRIMTPGRAITAGADYLVVGRPVVEAAEPKAIADAIQAEIGQALGA.

Residues Asp17, Lys39, 66–75 (DLKLHDIGNT), Thr121, Arg182, Gln191, Gly211, and Arg212 contribute to the substrate site. Lys68 (proton donor) is an active-site residue.

The protein belongs to the OMP decarboxylase family. Type 1 subfamily. As to quaternary structure, homodimer.

The enzyme catalyses orotidine 5'-phosphate + H(+) = UMP + CO2. The protein operates within pyrimidine metabolism; UMP biosynthesis via de novo pathway; UMP from orotate: step 2/2. Functionally, catalyzes the decarboxylation of orotidine 5'-monophosphate (OMP) to uridine 5'-monophosphate (UMP). This Bradyrhizobium diazoefficiens (strain JCM 10833 / BCRC 13528 / IAM 13628 / NBRC 14792 / USDA 110) protein is Orotidine 5'-phosphate decarboxylase.